The primary structure comprises 83 residues: RNA-binding protein Hfq (83 aa).

In terms of domain architecture, Sm spans 10-69 (DPFLNALRREHVPVSIYLVNGIKLQGQIESFDQYVVLLRNTVTQMVYKHAISTIVPGRAV).

The protein belongs to the Hfq family. Homohexamer.

Functionally, RNA chaperone that binds small regulatory RNA (sRNAs) and mRNAs to facilitate mRNA translational regulation in response to envelope stress, environmental stress and changes in metabolite concentrations. Also binds with high specificity to tRNAs. The chain is RNA-binding protein Hfq from Delftia acidovorans (strain DSM 14801 / SPH-1).